Reading from the N-terminus, the 116-residue chain is Putative pterin-4-alpha-carbinolamine dehydratase (116 aa).

The protein belongs to the pterin-4-alpha-carbinolamine dehydratase family.

It catalyses the reaction (4aS,6R)-4a-hydroxy-L-erythro-5,6,7,8-tetrahydrobiopterin = (6R)-L-erythro-6,7-dihydrobiopterin + H2O. This chain is Putative pterin-4-alpha-carbinolamine dehydratase, found in Paracidovorax citrulli (strain AAC00-1) (Acidovorax citrulli).